The primary structure comprises 73 residues: Toxin Td5 (73 aa).

A signal peptide spans 1-7 (IGMVVEC). Residues 8–70 (KDGYLVGNDG…IWNSATNRCR (63 aa)) enclose the LCN-type CS-alpha/beta domain. Disulfide bonds link C18/C69, C22/C44, C30/C50, and C34/C52. An Arginine amide modification is found at R70.

The protein belongs to the long (4 C-C) scorpion toxin superfamily. Sodium channel inhibitor family. Beta subfamily. Expressed by the venom gland.

It localises to the secreted. Its function is as follows. Beta toxins bind voltage-independently at site-4 of sodium channels (Nav) and shift the voltage of activation toward more negative potentials thereby affecting sodium channel activation and promoting spontaneous and repetitive firing. This Tityus discrepans (Venezuelan scorpion) protein is Toxin Td5.